Reading from the N-terminus, the 92-residue chain is Putative pterin-4-alpha-carbinolamine dehydratase (92 aa).

Belongs to the pterin-4-alpha-carbinolamine dehydratase family.

It carries out the reaction (4aS,6R)-4a-hydroxy-L-erythro-5,6,7,8-tetrahydrobiopterin = (6R)-L-erythro-6,7-dihydrobiopterin + H2O. The polypeptide is Putative pterin-4-alpha-carbinolamine dehydratase (Picosynechococcus sp. (strain ATCC 27264 / PCC 7002 / PR-6) (Agmenellum quadruplicatum)).